We begin with the raw amino-acid sequence, 311 residues long: MSNPSAPPPYEDRNPLYPGPPPPGGYGQPSVLPGGYPAYPGYPQPGYGHPAGYPQPMPPTHPMPMNYGPGHGYDGEERAVSDSFGPGEWDDRKVRHTFIRKVYSIISVQLLITVAIIAIFTFVEPVSAFVRRNVAVYYVSYAVFVVTYLILACCQGPRRRFPWNIILLTLFTFAMGFMTGTISSMYQTKAVIIAMIITAVVSISVTIFCFQTKVDFTSCTGLFCVLGIVLLVTGIVTSIVLYFQYVYWLHMLYAALGAICFTLFLAYDTQLVLGNRKHTISPEDYITGALQIYTDIIYIFTFVLQLMGDRN.

Disordered regions lie at residues 1-37 (MSNP…GGYP) and 50-72 (PAGY…PGHG). Over residues 53-62 (YPQPMPPTHP) the composition is skewed to pro residues. Phosphoserine is present on residues Ser-81 and Ser-83. The next 7 helical transmembrane spans lie at 110-130 (LLIT…SAFV), 134-154 (VAVY…LACC), 165-185 (IILL…ISSM), 190-210 (AVII…IFCF), 221-241 (GLFC…SIVL), 246-266 (VYWL…LFLA), and 286-306 (ITGA…VLQL).

This sequence belongs to the BI1 family. LFG subfamily.

The protein resides in the membrane. The protein localises to the lysosome membrane. It localises to the endosome membrane. In terms of biological role, negatively regulates aortic matrix metalloproteinase-9 (MMP9) production and may play a protective role in vascular remodeling. In Homo sapiens (Human), this protein is Protein lifeguard 3 (TMBIM1).